A 152-amino-acid chain; its full sequence is NAD(P)H-quinone oxidoreductase subunit N (152 aa).

This sequence belongs to the complex I NdhN subunit family. NDH-1 can be composed of about 15 different subunits; different subcomplexes with different compositions have been identified which probably have different functions.

It is found in the cellular thylakoid membrane. The enzyme catalyses a plastoquinone + NADH + (n+1) H(+)(in) = a plastoquinol + NAD(+) + n H(+)(out). It catalyses the reaction a plastoquinone + NADPH + (n+1) H(+)(in) = a plastoquinol + NADP(+) + n H(+)(out). NDH-1 shuttles electrons from an unknown electron donor, via FMN and iron-sulfur (Fe-S) centers, to quinones in the respiratory and/or the photosynthetic chain. The immediate electron acceptor for the enzyme in this species is believed to be plastoquinone. Couples the redox reaction to proton translocation, and thus conserves the redox energy in a proton gradient. Cyanobacterial NDH-1 also plays a role in inorganic carbon-concentration. The sequence is that of NAD(P)H-quinone oxidoreductase subunit N from Prochlorococcus marinus (strain SARG / CCMP1375 / SS120).